Here is a 432-residue protein sequence, read N- to C-terminus: Adenylosuccinate synthetase (432 aa).

GTP-binding positions include 11 to 17 (GDEGKGK) and 39 to 41 (GHT). D12 serves as the catalytic Proton acceptor. D12 and G39 together coordinate Mg(2+). Residues 12-15 (DEGK), 37-40 (NAGH), T134, R148, N230, T245, and R309 contribute to the IMP site. H40 functions as the Proton donor in the catalytic mechanism. 305–311 (VTTGRKR) is a substrate binding site. Residues R311, 337–339 (KLD), and 419–421 (GTG) each bind GTP.

It belongs to the adenylosuccinate synthetase family. In terms of assembly, homodimer. It depends on Mg(2+) as a cofactor.

Its subcellular location is the cytoplasm. The enzyme catalyses IMP + L-aspartate + GTP = N(6)-(1,2-dicarboxyethyl)-AMP + GDP + phosphate + 2 H(+). The protein operates within purine metabolism; AMP biosynthesis via de novo pathway; AMP from IMP: step 1/2. Its function is as follows. Plays an important role in the de novo pathway and in the salvage pathway of purine nucleotide biosynthesis. Catalyzes the first committed step in the biosynthesis of AMP from IMP. The chain is Adenylosuccinate synthetase from Kluyveromyces lactis (strain ATCC 8585 / CBS 2359 / DSM 70799 / NBRC 1267 / NRRL Y-1140 / WM37) (Yeast).